Here is a 901-residue protein sequence, read N- to C-terminus: HTH-type transcriptional regulator MalT (901 aa).

39–46 (SPAGYGKT) is an ATP binding site. Residues 829–894 (ELIRTSPLTQ…DAVQHAQQLL (66 aa)) enclose the HTH luxR-type domain. A DNA-binding region (H-T-H motif) is located at residues 853–872 (NEQIAGELEVAATTIKTHIR).

Belongs to the MalT family. As to quaternary structure, monomer in solution. Oligomerizes to an active state in the presence of the positive effectors ATP and maltotriose.

Its activity is regulated as follows. Activated by ATP and maltotriose, which are both required for DNA binding. Its function is as follows. Positively regulates the transcription of the maltose regulon whose gene products are responsible for uptake and catabolism of malto-oligosaccharides. Specifically binds to the promoter region of its target genes, recognizing a short DNA motif called the MalT box. This chain is HTH-type transcriptional regulator MalT, found in Escherichia coli (strain K12 / MC4100 / BW2952).